Reading from the N-terminus, the 537-residue chain is Glutamyl-tRNA reductase, chloroplastic (537 aa).

The transit peptide at 1–48 directs the protein to the chloroplast; the sequence is MMASTTSATAAGGAFAAAKTRAGSSAAGGGACARVAAGGRRRSGVVVR. Substrate contacts are provided by residues 134-137, Ser-194, 199-201, and Gln-205; these read TCNR and EGQ. Residue Cys-135 is the Nucleophile of the active site. 276 to 281 is an NADP(+) binding site; sequence GAGKMG.

This sequence belongs to the glutamyl-tRNA reductase family.

Its subcellular location is the plastid. It is found in the chloroplast. The enzyme catalyses (S)-4-amino-5-oxopentanoate + tRNA(Glu) + NADP(+) = L-glutamyl-tRNA(Glu) + NADPH + H(+). It participates in porphyrin-containing compound metabolism; protoporphyrin-IX biosynthesis; 5-aminolevulinate from L-glutamyl-tRNA(Glu): step 1/2. Its function is as follows. Catalyzes the NADPH-dependent reduction of glutamyl-tRNA(Glu) to glutamate 1-semialdehyde (GSA). This chain is Glutamyl-tRNA reductase, chloroplastic, found in Oryza sativa subsp. japonica (Rice).